The primary structure comprises 891 residues: Protein translocase subunit SecA 1 (891 aa).

Residues Gln-85, 103-107 (GEGKT), and Asp-491 each bind ATP. Residues Cys-877, Cys-879, Cys-888, and Cys-889 each coordinate Zn(2+).

Belongs to the SecA family. As to quaternary structure, monomer and homodimer. Part of the essential Sec protein translocation apparatus which comprises SecA, SecYEG and auxiliary proteins SecDF. Other proteins may also be involved. The cofactor is Zn(2+).

The protein resides in the cell membrane. The protein localises to the cytoplasm. The enzyme catalyses ATP + H2O + cellular proteinSide 1 = ADP + phosphate + cellular proteinSide 2.. Its function is as follows. Part of the Sec protein translocase complex. Interacts with the SecYEG preprotein conducting channel. Has a central role in coupling the hydrolysis of ATP to the transfer of proteins into and across the cell membrane, serving as an ATP-driven molecular motor driving the stepwise translocation of polypeptide chains across the membrane. The protein is Protein translocase subunit SecA 1 of Clostridioides difficile (strain 630) (Peptoclostridium difficile).